The chain runs to 470 residues: Glutamate--tRNA ligase (470 aa).

The 'HIGH' region motif lies at 9-19 (PSPTGYLHVGG). A 'KMSKS' region motif is present at residues 236–240 (RLSKR). An ATP-binding site is contributed by K239.

Belongs to the class-I aminoacyl-tRNA synthetase family. Glutamate--tRNA ligase type 1 subfamily. In terms of assembly, monomer.

It is found in the cytoplasm. The enzyme catalyses tRNA(Glu) + L-glutamate + ATP = L-glutamyl-tRNA(Glu) + AMP + diphosphate. Catalyzes the attachment of glutamate to tRNA(Glu) in a two-step reaction: glutamate is first activated by ATP to form Glu-AMP and then transferred to the acceptor end of tRNA(Glu). This chain is Glutamate--tRNA ligase, found in Colwellia psychrerythraea (strain 34H / ATCC BAA-681) (Vibrio psychroerythus).